A 485-amino-acid chain; its full sequence is FAD-dependent monooxygenase elcH (485 aa).

An N-terminal signal peptide occupies residues 1–19 (MFTLRSLAILAVFAATALA). Residues Asp-59 and Gly-73 each coordinate FAD. Residues Asn-126, Asn-147, and Asn-157 are each glycosylated (N-linked (GlcNAc...) asparagine).

This sequence belongs to the paxM FAD-dependent monooxygenase family. FAD serves as cofactor.

It participates in secondary metabolite biosynthesis. In terms of biological role, FAD-dependent monooxygenase; part of the gene cluster that mediates the biosynthesis of elsinochrome C, a perelyenequinone phytotoxin structurally similar to cercosporin. The first step of elsinochrome C biosynthesis is performed by the polyketide synthase elcA which catalyzes the formation of nor-toralactone. The starter unit acyltransferase (SAT) domain of elcA initiates polyketide extension by the selective utilization of acetyl-CoA, which is elongated to the heptaketide in the beta-ketoacyl synthase (KS) domain by successive condensations with six malonyl units introduced by the malonyl acyltransferase (MAT) domain. The product template (PT) domain catalyzes C4-C9 and C2-C11 aldol cyclizations and dehydrations to a trihydroxynaphthalene, which is thought to be delivered to the thioesterase (TE) domain for product release. The bifunctional enzyme elcB then methylates nor-toralactone to toralactone before conducting an unusual oxidative aromatic ring opening. The next step in perylenequinone biosynthesis is an O-methylation at the nascent OH-6 of the elcB product performed by the O-methyltransferase elcD. The oxidative coupling of the two monomeric naphthol units in perylenequinone biosynthesis is catalyzed by the FAD-dependent monooxygenase elcE and the multicopper oxidase elcG. ElcG might catalyze the first intermolecular coupling in a regio- and stereo-selective manner via a phenol radical coupling mechanism and the elcE could forge the second C-C bond intramolecularly via a hydride transfer mechanism. The fasciclin domain-containing protein elcF might also play a role duting this step. The last piece of the puzzle in the biosynthesis of elsinochrome C is the additional annulation by enolate coupling to afford the dihydrobenzo(ghi)perylenequinone system, catalyzed by the FAD-dependent monooxygenase elcH. The sequence is that of FAD-dependent monooxygenase elcH from Phaeosphaeria nodorum (strain SN15 / ATCC MYA-4574 / FGSC 10173) (Glume blotch fungus).